A 147-amino-acid polypeptide reads, in one-letter code: D-aminoacyl-tRNA deacylase (147 aa).

The Gly-cisPro motif, important for rejection of L-amino acids motif lies at 136 to 137; sequence GP.

This sequence belongs to the DTD family. As to quaternary structure, homodimer.

The protein resides in the cytoplasm. It catalyses the reaction glycyl-tRNA(Ala) + H2O = tRNA(Ala) + glycine + H(+). It carries out the reaction a D-aminoacyl-tRNA + H2O = a tRNA + a D-alpha-amino acid + H(+). Functionally, an aminoacyl-tRNA editing enzyme that deacylates mischarged D-aminoacyl-tRNAs. Also deacylates mischarged glycyl-tRNA(Ala), protecting cells against glycine mischarging by AlaRS. Acts via tRNA-based rather than protein-based catalysis; rejects L-amino acids rather than detecting D-amino acids in the active site. By recycling D-aminoacyl-tRNA to D-amino acids and free tRNA molecules, this enzyme counteracts the toxicity associated with the formation of D-aminoacyl-tRNA entities in vivo and helps enforce protein L-homochirality. In Persephonella marina (strain DSM 14350 / EX-H1), this protein is D-aminoacyl-tRNA deacylase.